Consider the following 193-residue polypeptide: Peptidyl-tRNA hydrolase (193 aa).

Residue tyrosine 14 coordinates tRNA. Histidine 19 serves as the catalytic Proton acceptor. 3 residues coordinate tRNA: phenylalanine 64, asparagine 66, and asparagine 112.

The protein belongs to the PTH family. As to quaternary structure, monomer.

It is found in the cytoplasm. It carries out the reaction an N-acyl-L-alpha-aminoacyl-tRNA + H2O = an N-acyl-L-amino acid + a tRNA + H(+). Functionally, hydrolyzes ribosome-free peptidyl-tRNAs (with 1 or more amino acids incorporated), which drop off the ribosome during protein synthesis, or as a result of ribosome stalling. Catalyzes the release of premature peptidyl moieties from peptidyl-tRNA molecules trapped in stalled 50S ribosomal subunits, and thus maintains levels of free tRNAs and 50S ribosomes. This is Peptidyl-tRNA hydrolase from Bartonella quintana (strain Toulouse) (Rochalimaea quintana).